Reading from the N-terminus, the 294-residue chain is 2,2',3-trihydroxybiphenyl dioxygenase (294 aa).

VOC domains lie at 7–120 (GYLI…LYVE) and 144–264 (GLGH…LGFG). Fe cation is bound by residues His-147, His-209, and Glu-260.

The protein belongs to the extradiol ring-cleavage dioxygenase family. Monomer. Fe(2+) is required as a cofactor.

It functions in the pathway xenobiotic degradation; dibenzo-p-dioxin degradation; 2-hydroxymuconate and catechol from dibenzo-p-dioxin: step 2/3. It participates in xenobiotic degradation; dibenzofuran degradation; 2-hydroxy-2,4-pentadienoate and salicylate from dibenzofuran: step 2/3. In terms of biological role, responsible for meta-cleavage of the first aromatic ring of 2,2',3-trihydroxybiphenyl and 2,3-dihydroxybiphenyl. 2,2',3-trihydroxydiphenyl ether, catechol, 3-methylcatechol, and 4-methylcatechol are oxidized less efficiently and 3,4-dihydroxybiphenyl is oxidized considerably less efficiently. This is 2,2',3-trihydroxybiphenyl dioxygenase (dbfB) from Sphingomonas paucimobilis (Pseudomonas paucimobilis).